The following is a 238-amino-acid chain: Aliphatic sulfonates import ATP-binding protein SsuB (238 aa).

The ABC transporter domain occupies 7–221 (VSLHQVHQQF…RPGDAAFASL (215 aa)). Residue 39 to 46 (GRSGSGKT) coordinates ATP.

This sequence belongs to the ABC transporter superfamily. Aliphatic sulfonates importer (TC 3.A.1.17.2) family. As to quaternary structure, the complex is composed of two ATP-binding proteins (SsuB), two transmembrane proteins (SsuC) and a solute-binding protein (SsuA).

It localises to the cell inner membrane. The enzyme catalyses ATP + H2O + aliphatic sulfonate-[sulfonate-binding protein]Side 1 = ADP + phosphate + aliphatic sulfonateSide 2 + [sulfonate-binding protein]Side 1.. Its function is as follows. Part of the ABC transporter complex SsuABC involved in aliphatic sulfonates import. Responsible for energy coupling to the transport system. The protein is Aliphatic sulfonates import ATP-binding protein SsuB of Granulibacter bethesdensis (strain ATCC BAA-1260 / CGDNIH1).